We begin with the raw amino-acid sequence, 33 residues long: Rugosin-A (33 aa).

C27 and C33 form a disulfide bridge.

It belongs to the frog skin active peptide (FSAP) family. Brevinin subfamily. In terms of tissue distribution, expressed by the skin glands.

It localises to the secreted. Its function is as follows. Has antibacterial activity against Gram-positive bacteria. The protein is Rugosin-A of Glandirana rugosa (Japanese wrinkled frog).